Here is a 328-residue protein sequence, read N- to C-terminus: GMP reductase (328 aa).

The active-site Thioimidate intermediate is cysteine 176. An NADP(+)-binding site is contributed by 205-228 (IIADGGIRTHGDIAKSIRFGASMI).

This sequence belongs to the IMPDH/GMPR family. GuaC type 2 subfamily.

It carries out the reaction IMP + NH4(+) + NADP(+) = GMP + NADPH + 2 H(+). Functionally, catalyzes the irreversible NADPH-dependent deamination of GMP to IMP. It functions in the conversion of nucleobase, nucleoside and nucleotide derivatives of G to A nucleotides, and in maintaining the intracellular balance of A and G nucleotides. The polypeptide is GMP reductase (Streptococcus pneumoniae (strain P1031)).